Consider the following 1038-residue polypeptide: Activated CDC42 kinase 1 (1038 aa).

The tract at residues 1–110 (MQPEEGTGWL…TSPAPGGPAG (110 aa)) is SAM-like domain. A disordered region spans residues 90 to 114 (PPHHSQSTFRKTSPAPGGPAGEGPL). In terms of domain architecture, Protein kinase spans 126 to 385 (LRLLEKLGDG…PTFVALRDFL (260 aa)). ATP contacts are provided by residues 132–140 (LGDGSFGVV) and Lys158. Asp252 serves as the catalytic Proton acceptor. Tyr284 is subject to Phosphotyrosine; by SRC and autocatalysis. The SH3 domain occupies 388 to 448 (AQPTDMRALQ…PRNVVTSVAG (61 aa)). The 13-residue stretch at 454–466 (ISQPLQNSFIHTG) folds into the CRIB domain. A disordered region spans residues 497 to 535 (LSVELSTSRPPQHLGGVKKPTYDPVSEDQDPLSSDFKRL). At Tyr518 the chain carries Phosphotyrosine. Residues 623-652 (DWDARPLPPPPAYDDVAQDEDDFEICSINS) form a required for interaction with SRC region. Residues 632–635 (PPAY) form a required for interaction with NEDD4 region. Disordered regions lie at residues 659–702 (VPAG…SSAQ) and 718–840 (LQAP…GPRA). Ser724 is subject to Phosphoserine. The tract at residues 733 to 876 (GDDKPQVPPR…SYLERYQRFL (144 aa)) is EBD domain. Composition is skewed to pro residues over residues 738-749 (QVPPRVPIPPRP), 772-783 (PASPPRVPPREP), and 794-805 (PLVPPGSSPLPP). Tyr827 is subject to Phosphotyrosine. The residue at position 839 (Arg839) is an Omega-N-methylarginine. Phosphotyrosine occurs at positions 859 and 872. Ser881 carries the phosphoserine modification. Residues 917-957 (LDPKANFSTNNSNPGARPPPPRATARLPQRGCPGDGPEAGR) form a disordered region. The UBA domain maps to 958–996 (PADKIQMAMVHGVTTEECQAALQCHGWSVQRAAQYLKVE).

It belongs to the protein kinase superfamily. Tyr protein kinase family. As to quaternary structure, interacts with NEDD4 (via WW3 domain). NEDD4L and EGF promote association with NEDD4. Homodimer. Interacts with AR, CDC42, WWASL and WWOX. Interacts with CSPG4 (activated). Interacts with MERTK (activated); stimulates autophosphorylation. May interact (phosphorylated) with HSP90AB1; maintains kinase activity. Interacts with NPHP1. Interacts with SNX9 (via SH3 domain). Interacts with SRC (via SH2 and SH3 domain). Interacts with EGFR, and this interaction is dependent on EGF stimulation and kinase activity of EGFR. Interacts (via kinase domain) with AKT1. Part of a collagen stimulated complex involved in cell migration composed of CDC42, CRK, TNK2 and BCAR1/p130cas. Interacts with BCAR1/p130cas via SH3 domains. Forms complexes with GRB2 and numerous receptor tyrosine kinases (RTK) including LTK, AXL or PDGFRL, in which GRB2 promotes RTK recruitment by TNK2. Requires Mg(2+) as cofactor. In terms of processing, autophosphorylation regulates kinase activity. Phosphorylation on Tyr-518 is required for interaction with SRC and is observed during association with clathrin-coated pits. Post-translationally, polyubiquitinated by NEDD4 and NEDD4L. Degradation can be induced by EGF and is lysosome-dependent. The Tyr-284 phosphorylated form shows a significant increase in expression in breast cancers during the progressive stages i.e. normal to hyperplasia (ADH), ductal carcinoma in situ (DCIS), invasive ductal carcinoma (IDC) and lymph node metastatic (LNMM) stages. It also shows a significant increase in expression in prostate cancers during the progressive stages.

It localises to the cell membrane. It is found in the nucleus. The protein localises to the endosome. The protein resides in the cell junction. Its subcellular location is the adherens junction. It localises to the cytoplasmic vesicle membrane. It is found in the cytoplasmic vesicle. The protein localises to the clathrin-coated vesicle. The protein resides in the membrane. Its subcellular location is the clathrin-coated pit. It localises to the cytoplasm. It is found in the perinuclear region. The protein localises to the cytosol. The enzyme catalyses L-tyrosyl-[protein] + ATP = O-phospho-L-tyrosyl-[protein] + ADP + H(+). It carries out the reaction L-seryl-[protein] + ATP = O-phospho-L-seryl-[protein] + ADP + H(+). The catalysed reaction is L-threonyl-[protein] + ATP = O-phospho-L-threonyl-[protein] + ADP + H(+). With respect to regulation, inhibited by AIM-100 (4-amino-5,6-biaryl-furo[2,3-d]pyrimidine), which suppresses activating phosphorylation at Tyr-284. Repressed by dasatinib. In terms of biological role, non-receptor tyrosine-protein and serine/threonine-protein kinase that is implicated in cell spreading and migration, cell survival, cell growth and proliferation. Transduces extracellular signals to cytosolic and nuclear effectors. Phosphorylates AKT1, AR, MCF2, WASL and WWOX. Implicated in trafficking and clathrin-mediated endocytosis through binding to epidermal growth factor receptor (EGFR) and clathrin. Binds to both poly- and mono-ubiquitin and regulates ligand-induced degradation of EGFR, thereby contributing to the accumulation of EGFR at the limiting membrane of early endosomes. Downstream effector of CDC42 which mediates CDC42-dependent cell migration via phosphorylation of BCAR1. May be involved both in adult synaptic function and plasticity and in brain development. Activates AKT1 by phosphorylating it on 'Tyr-176'. Phosphorylates AR on 'Tyr-267' and 'Tyr-363' thereby promoting its recruitment to androgen-responsive enhancers (AREs). Phosphorylates WWOX on 'Tyr-287'. Phosphorylates MCF2, thereby enhancing its activity as a guanine nucleotide exchange factor (GEF) toward Rho family proteins. Contributes to the control of AXL receptor levels. Confers metastatic properties on cancer cells and promotes tumor growth by negatively regulating tumor suppressor such as WWOX and positively regulating pro-survival factors such as AKT1 and AR. Phosphorylates WASP. The protein is Activated CDC42 kinase 1 (TNK2) of Homo sapiens (Human).